Reading from the N-terminus, the 143-residue chain is Small ribosomal subunit protein uS11c (143 aa).

It belongs to the universal ribosomal protein uS11 family. As to quaternary structure, part of the 30S ribosomal subunit.

Its subcellular location is the plastid. The protein resides in the chloroplast. The protein is Small ribosomal subunit protein uS11c of Zea mays (Maize).